A 3707-amino-acid polypeptide reads, in one-letter code: CUB and sushi domain-containing protein 3 (3707 aa).

Residues 1-21 show a composition bias toward basic and acidic residues; sequence MKGSRKGESRAKESKPREPGT. The interval 1 to 22 is disordered; that stretch reads MKGSRKGESRAKESKPREPGTR. Over 1–42 the chain is Cytoplasmic; sequence MKGSRKGESRAKESKPREPGTRRCAKCGRLDFILKKKMGIKS. The chain crosses the membrane as a helical span at residues 43–63; sequence GFTFWNLVFLLTLSCVKGFIY. The Extracellular portion of the chain corresponds to 64–3630; the sequence is TCGGTLKGLN…NQPHGTNSSS (3567 aa). 4 disulfides stabilise this stretch: C65/C91, C178/C218, C204/C235, and C241/C267. Residues 65 to 173 enclose the CUB 1 domain; sequence CGGTLKGLNG…HGFKVYYEEL (109 aa). 2 N-linked (GlcNAc...) asparagine glycosylation sites follow: N73 and N90. In terms of domain architecture, Sushi 1 spans 176-237; sequence SSCGNPGVPP…WDFPVPICRA (62 aa). Positions 241–345 constitute a CUB 2 domain; sequence CGGTMRGSSG…RGFSAPYQGS (105 aa). Residues 388 to 437 form a disordered region; the sequence is HRLSEEQRVQVRSLSDSGLDPNTPEDQLSPHQADTQSTSRRPRNAEQIER. Polar residues predominate over residues 411 to 426; the sequence is PEDQLSPHQADTQSTS. One can recognise a Sushi 2 domain in the interval 484 to 545; that stretch reads NLCPDPGEPE…WSDHRPVCKV (62 aa). 6 cysteine pairs are disulfide-bonded: C486–C526, C512–C543, C548–C574, C664–C704, C690–C717, and C721–C747. The CUB 3 domain occupies 548 to 659; the sequence is CGSNLQGPSG…VGFKVNYKEI (112 aa). Residues 662 to 719 form the Sushi 3 domain; sequence ESCGDPGTPLYGIREGDGFSNRDVLRFECQFGFELIGEKSIVCQENNQWSANIPICIF. The CUB 4 domain maps to 721–829; it reads CLSNFTAPMG…RGFNITYNTF (109 aa). 2 N-linked (GlcNAc...) asparagine glycosylation sites follow: N724 and N823. The Sushi 4 domain occupies 832-893; it reads NECPDPGIPI…WSGPIPRCGA (62 aa). 3 cysteine pairs are disulfide-bonded: C834–C875, C860–C891, and C895–C921. Residues 895–1003 enclose the CUB 5 domain; that stretch reads CGGHFSAPSG…NGFKIHYESV (109 aa). The N-linked (GlcNAc...) asparagine glycan is linked to N966. Residues 1008-1065 enclose the Sushi 5 domain; that stretch reads YSCLDPGIPVHGRRYGHDFSIGSTVSFSCDPGYRLSHEEPLLCEKNHWWSHPLPTCDA. Disulfide bonds link C1010/C1050, C1036/C1063, and C1067/C1093. Residues 1067–1177 enclose the CUB 6 domain; that stretch reads CGGDVRGPSG…EGFNITFSEY (111 aa). Residues N1092, N1126, and N1171 are each glycosylated (N-linked (GlcNAc...) asparagine). A Sushi 6 domain is found at 1180 to 1239; sequence EPCEDPGIPQYGSRVGFSFGVGDTLTFSCSLGYRLEGSSEIICLGGGRRVWSAPLPRCVA. 3 disulfides stabilise this stretch: C1182-C1222, C1208-C1237, and C1241-C1267. A CUB 7 domain is found at 1241 to 1349; sequence CGASATNNEG…EGFQLVYTSF (109 aa). Residue N1280 is glycosylated (N-linked (GlcNAc...) asparagine). Positions 1352–1412 constitute a Sushi 7 domain; that stretch reads SHCEDPGIPQ…WDYPLPSCIA (61 aa). Intrachain disulfides connect C1354/C1395, C1381/C1410, C1414/C1441, C1528/C1568, C1554/C1584, C1588/C1614, C1701/C1741, C1727/C1758, C1762/C1788, C1878/C1918, C1904/C1935, and C1939/C1965. The 110-residue stretch at 1414 to 1523 folds into the CUB 8 domain; it reads CGGRFKGESS…SGFAIQFSSS (110 aa). A Sushi 8 domain is found at 1526-1586; it reads TACRDPGVPM…WQPSPPVCIA (61 aa). The N-linked (GlcNAc...) asparagine glycan is linked to N1536. One can recognise a CUB 9 domain in the interval 1588–1696; it reads CGGNLTGSSG…TGFHLEYKAK (109 aa). N-linked (GlcNAc...) asparagine glycosylation is found at N1591 and N1709. Residues 1699 to 1760 enclose the Sushi 9 domain; it reads ESCFDPGNIM…WNRVLPSCHA (62 aa). Residues 1762–1870 form the CUB 10 domain; the sequence is CGSRSTGSEG…KGFHFVYQAV (109 aa). An N-linked (GlcNAc...) asparagine glycan is attached at N1781. The region spanning 1876–1937 is the Sushi 10 domain; the sequence is TQCSSVPEPR…WNDSLPTCIV (62 aa). N1929 is a glycosylation site (N-linked (GlcNAc...) asparagine). The CUB 11 domain occupies 1939-2047; it reads CGGILTKRKG…AGFHLEYTAI (109 aa). A glycan (N-linked (GlcNAc...) asparagine) is linked at N2019. Residues 2050-2109 form the Sushi 11 domain; sequence DSCPEPQTPSSGIKVGDRYMVGDVVSFQCDQGYSLQGHSHITCMPGPVRRWNYPIPICLA. Disulfide bonds link C2052-C2092, C2078-C2107, and C2111-C2137. In terms of domain architecture, CUB 12 spans 2111 to 2219; sequence CGGAMSDFSG…QGFHIVYQAY (109 aa). N-linked (GlcNAc...) asparagine glycosylation is present at N2155. The Sushi 12 domain occupies 2222–2281; sequence QSCPDPRPFRNGFVIGNDFTVGQTISFECFPGYTLIGNSALTCLHGVSRNWNHPLPRCEA. 36 disulfides stabilise this stretch: C2224–C2264, C2250–C2279, C2283–C2309, C2395–C2437, C2423–C2452, C2456–C2484, C2569–C2610, C2596–C2627, C2632–C2674, C2658–C2689, C2694–C2739, C2725–C2754, C2759–C2799, C2785–C2812, C2817–C2857, C2843–C2870, C2875–C2915, C2901–C2928, C2933–C2977, C2963–C2990, C2995–C3035, C3021–C3048, C3056–C3096, C3082–C3109, C3114–C3155, C3141–C3168, C3173–C3215, C3199–C3228, C3233–C3273, C3259–C3286, C3291–C3331, C3317–C3344, C3352–C3393, C3379–C3406, C3411–C3453, and C3438–C3466. In terms of domain architecture, CUB 13 spans 2283–2394; the sequence is CGGNITAMNG…LSYHAYQLRV (112 aa). 2 N-linked (GlcNAc...) asparagine glycosylation sites follow: N2286 and N2291. The Sushi 13 domain maps to 2393 to 2454; the sequence is RVCQPPPPVP…MDGAPPVCQV (62 aa). The region spanning 2456-2567 is the CUB 14 domain; it reads CPANELRLDS…KGFRIRYIAF (112 aa). Sushi domains follow at residues 2567-2629, 2630-2691, 2692-2756, 2757-2814, 2815-2872, 2873-2930, 2931-2992, 2993-3050, 3054-3111, 3112-3170, 3171-3230, 3231-3288, 3289-3346, 3350-3408, and 3409-3468; these read FYCS…ACQA, ISCG…RCVV, VTCP…YCQI, ISCG…RCLA, GHCG…SCVP, VSCG…VCKV, VNCS…ECIM, IDCG…HCSG, GTCG…ECKA, VQCG…NCTI, ISCG…TCRA, VTCS…QCLP, KFCG…HCIE, TSCE…ECIP, and HSCK…VCEA. Positions 3052-3065 are enriched in low complexity; the sequence is TTGTCGDPGTPGHG. Residues 3052 to 3071 are disordered; the sequence is TTGTCGDPGTPGHGSRQESD. A helical transmembrane segment spans residues 3631–3651; sequence VAIAILVPFFALIFAGFGFYL. The Cytoplasmic portion of the chain corresponds to 3652 to 3707; it reads YKQRTAPKTQYTGCSVHENNNGQAAFENPMYDTNAKSVEGKAVRFDPNLNTVCTMV.

This sequence belongs to the CSMD family. In terms of tissue distribution, expressed in the apical dendrites of postnatal hippocampal neurons (at protein level).

Its subcellular location is the cell membrane. Functionally, involved in dendrite development. This Mus musculus (Mouse) protein is CUB and sushi domain-containing protein 3 (Csmd3).